We begin with the raw amino-acid sequence, 313 residues long: Biotin synthase (313 aa).

In terms of domain architecture, Radical SAM core spans 28 to 258 (NFGNDIELCS…LFPQARLRLS (231 aa)). Residues Cys-46, Cys-50, and Cys-53 each contribute to the [4Fe-4S] cluster site. [2Fe-2S] cluster-binding residues include Cys-90, Cys-121, Cys-181, and Arg-256.

It belongs to the radical SAM superfamily. Biotin synthase family. In terms of assembly, homodimer. It depends on [4Fe-4S] cluster as a cofactor. Requires [2Fe-2S] cluster as cofactor.

It catalyses the reaction (4R,5S)-dethiobiotin + (sulfur carrier)-SH + 2 reduced [2Fe-2S]-[ferredoxin] + 2 S-adenosyl-L-methionine = (sulfur carrier)-H + biotin + 2 5'-deoxyadenosine + 2 L-methionine + 2 oxidized [2Fe-2S]-[ferredoxin]. The protein operates within cofactor biosynthesis; biotin biosynthesis; biotin from 7,8-diaminononanoate: step 2/2. In terms of biological role, catalyzes the conversion of dethiobiotin (DTB) to biotin by the insertion of a sulfur atom into dethiobiotin via a radical-based mechanism. This chain is Biotin synthase, found in Francisella philomiragia subsp. philomiragia (strain ATCC 25017 / CCUG 19701 / FSC 153 / O#319-036).